The primary structure comprises 266 residues: Glucosamine-6-phosphate deaminase (266 aa).

Catalysis depends on Asp-72, which acts as the Proton acceptor; for enolization step. Asp-141 acts as the For ring-opening step in catalysis. The active-site Proton acceptor; for ring-opening step is His-143. The active-site For ring-opening step is the Glu-148.

It belongs to the glucosamine/galactosamine-6-phosphate isomerase family. NagB subfamily. In terms of assembly, homohexamer.

The catalysed reaction is alpha-D-glucosamine 6-phosphate + H2O = beta-D-fructose 6-phosphate + NH4(+). It participates in amino-sugar metabolism; N-acetylneuraminate degradation; D-fructose 6-phosphate from N-acetylneuraminate: step 5/5. Allosterically activated by N-acetylglucosamine 6-phosphate (GlcNAc6P). Its function is as follows. Catalyzes the reversible isomerization-deamination of glucosamine 6-phosphate (GlcN6P) to form fructose 6-phosphate (Fru6P) and ammonium ion. The protein is Glucosamine-6-phosphate deaminase of Tolumonas auensis (strain DSM 9187 / NBRC 110442 / TA 4).